Reading from the N-terminus, the 250-residue chain is Golgi SNAP receptor complex member 1 (250 aa).

A2 is subject to N-acetylalanine. The Cytoplasmic segment spans residues 2–229 (AAGTSNYWED…QRINLRKRRD (228 aa)). The stretch at 10–30 (EDLRKQARQLENELDLKLVSF) forms a coiled coil. The tract at residues 39–59 (HSSARDGRRDRYSSDTTPLLN) is disordered. Residues 41 to 51 (SARDGRRDRYS) are compositionally biased toward basic and acidic residues. Residues 70 to 93 (MAIEIEQLLARLTGINDKMAEYTS) adopt a coiled-coil conformation. Residue S141 is modified to Phosphoserine. The chain crosses the membrane as a helical; Anchor for type IV membrane protein span at residues 230–250 (SLILGGVIGVCTILLLLYAFH).

Belongs to the GOSR1 family. In terms of assembly, component of several multiprotein Golgi SNARE complexes. Identified in a SNARE complex with BET1, STX5 and YKT6, in a SNARE complex with BET1L, STX5 and YKT6, in a SNARE complex with STX5, GOSR2, SEC22B and BET1, and in complex with STX5 and COG3. Interacts with GABARAPL2.

The protein localises to the golgi apparatus membrane. Involved in transport from the ER to the Golgi apparatus as well as in intra-Golgi transport. It belongs to a super-family of proteins called t-SNAREs or soluble NSF (N-ethylmaleimide-sensitive factor) attachment protein receptor. May play a protective role against hydrogen peroxide induced cytotoxicity under glutathione depleted conditions in neuronal cells by regulating the intracellular ROS levels via inhibition of p38 MAPK (MAPK11, MAPK12, MAPK13 and MAPK14). Participates in docking and fusion stage of ER to cis-Golgi transport. Plays an important physiological role in VLDL-transport vesicle-Golgi fusion and thus in VLDL delivery to the hepatic cis-Golgi. The protein is Golgi SNAP receptor complex member 1 (GOSR1) of Bos taurus (Bovine).